Here is a 247-residue protein sequence, read N- to C-terminus: Sugar fermentation stimulation protein homolog (247 aa).

Belongs to the SfsA family.

In Aeromonas hydrophila subsp. hydrophila (strain ATCC 7966 / DSM 30187 / BCRC 13018 / CCUG 14551 / JCM 1027 / KCTC 2358 / NCIMB 9240 / NCTC 8049), this protein is Sugar fermentation stimulation protein homolog.